Reading from the N-terminus, the 184-residue chain is Photosystem I assembly protein Ycf4 (184 aa).

The next 2 membrane-spanning stretches (helical) occupy residues 22 to 42 and 57 to 77; these read FCWAFILFLGSLGFLLVGTSS and IIFFPQGIVMSFYGIAGLFIS.

The protein belongs to the Ycf4 family.

It localises to the plastid. The protein resides in the chloroplast thylakoid membrane. Functionally, seems to be required for the assembly of the photosystem I complex. This is Photosystem I assembly protein Ycf4 from Lepidium virginicum (Virginia pepperweed).